The chain runs to 517 residues: Histone H4 transcription factor (517 aa).

3 C2H2-type zinc fingers span residues 15 to 39 (LQCEWGSCSFVCSTMEKFFEHVTQH), 129 to 153 (FLCLWEHCENSFDNPEWFYRHVEAH), and 169 to 193 (VLCGWKGCTCTFKDRSKLREHLRSH). The segment at 199–221 (VACPTCGGMFANNTKFLDHIRRQ) adopts a C2H2-type 4; degenerate zinc-finger fold. C2H2-type zinc fingers lie at residues 229 to 251 (FQCSHCSKRFATERLLRDHMRNH), 255 to 278 (YKCPLCDMTCPLPSSLRNHMRFRH), 284 to 306 (FKCDCCDYSCKNLIDLQKHLDTH), 312 to 337 (YRCDFENCTFSARSLCSIKSHYRKVH), and 345 to 368 (YKCHVCDKCFTRGNNLTVHLRKKH). The interval 373-517 (PSGHPRFRYK…IAEEPEIQMV (145 aa)) is interaction with NPAT. The segment at 374 to 407 (SGHPRFRYKEHEDGYMRLQLVRYESVELTQQLLR) is required for activation of histone H4 transcription and contributes to DNA-binding. Positions 431–460 (TVPGEPGRKEEEEEGKGSEGTALSASQDNP) are disordered. A compositionally biased stretch (polar residues) spans 451-460 (TALSASQDNP).

As to quaternary structure, binds MBD2 and a histone deacetylase complex. Interacts with NPAT. Post-translationally, ubiquitinated. Ubiquitination may lead to proteasome-mediated degradation. Ubiquitous. Highly expressed in brain, heart, skeletal muscle, spleen, kidney, small intestine, placenta and liver.

It is found in the nucleus. Functionally, transcriptional repressor that binds to the consensus sequence 5'-CGGACGTT-3' and to the RB1 promoter. Transcriptional activator that promotes histone H4 gene transcription at the G1/S phase transition in conjunction with NPAT. Also activates transcription of the ATM and PRKDC genes. Autoregulates its expression by associating with its own promoter. The protein is Histone H4 transcription factor (HINFP) of Homo sapiens (Human).